Reading from the N-terminus, the 247-residue chain is Caffeoyl-CoA O-methyltransferase 1 (247 aa).

A substrate-binding site is contributed by K21. S-adenosyl-L-methionine is bound by residues T63, E85, 87-88 (GV), S93, D111, and A140. Residue D163 coordinates substrate. D163 is a binding site for a divalent metal cation. D165 contacts S-adenosyl-L-methionine. 2 residues coordinate a divalent metal cation: D189 and N190. N194 contributes to the substrate binding site.

It belongs to the class I-like SAM-binding methyltransferase superfamily. Cation-dependent O-methyltransferase family. CCoAMT subfamily. A divalent metal cation is required as a cofactor.

The enzyme catalyses (E)-caffeoyl-CoA + S-adenosyl-L-methionine = (E)-feruloyl-CoA + S-adenosyl-L-homocysteine + H(+). It functions in the pathway aromatic compound metabolism; phenylpropanoid biosynthesis. In terms of biological role, methylates caffeoyl-CoA to feruloyl-CoA and 5-hydroxyferuloyl-CoA to sinapoyl-CoA. Plays a role in the synthesis of feruloylated polysaccharides. Involved in the reinforcement of the plant cell wall. Also involved in the responding to wounding or pathogen challenge by the increased formation of cell wall-bound ferulic acid polymers. The sequence is that of Caffeoyl-CoA O-methyltransferase 1 (CCOAOMT1) from Populus trichocarpa (Western balsam poplar).